The primary structure comprises 902 residues: Glycogen phosphorylase (902 aa).

A disordered region spans residues 1 to 21 (MPPASTSTTNDMITEEPTSPH). Thr-31 carries the post-translational modification Phosphothreonine. Residue Ser-333 is modified to Phosphoserine. The residue at position 751 (Lys-751) is an N6-(pyridoxal phosphate)lysine.

The protein belongs to the glycogen phosphorylase family. As to quaternary structure, homodimer. Requires pyridoxal 5'-phosphate as cofactor.

The protein resides in the cytoplasm. It localises to the cytosol. It catalyses the reaction [(1-&gt;4)-alpha-D-glucosyl](n) + phosphate = [(1-&gt;4)-alpha-D-glucosyl](n-1) + alpha-D-glucose 1-phosphate. With respect to regulation, activated by phosphorylation of Thr-31. In terms of biological role, phosphorylase is an important allosteric enzyme in carbohydrate metabolism. Enzymes from different sources differ in their regulatory mechanisms and in their natural substrates. However, all known phosphorylases share catalytic and structural properties. This chain is Glycogen phosphorylase (GPH1), found in Saccharomyces cerevisiae (strain ATCC 204508 / S288c) (Baker's yeast).